The sequence spans 228 residues: Probable octanoyltransferase (228 aa).

The region spanning Ser27–Val198 is the BPL/LPL catalytic domain. Substrate contacts are provided by residues Arg65–His72, Ser129–Gly131, and Gly142–Ala144. The active-site Acyl-thioester intermediate is Cys160.

This sequence belongs to the LipB family.

The protein localises to the cytoplasm. The catalysed reaction is octanoyl-[ACP] + L-lysyl-[protein] = N(6)-octanoyl-L-lysyl-[protein] + holo-[ACP] + H(+). It functions in the pathway protein modification; protein lipoylation via endogenous pathway; protein N(6)-(lipoyl)lysine from octanoyl-[acyl-carrier-protein]: step 1/2. Functionally, catalyzes the transfer of endogenously produced octanoic acid from octanoyl-acyl-carrier-protein onto the lipoyl domains of lipoate-dependent enzymes. Lipoyl-ACP can also act as a substrate although octanoyl-ACP is likely to be the physiological substrate. In Pyrobaculum calidifontis (strain DSM 21063 / JCM 11548 / VA1), this protein is Probable octanoyltransferase.